Here is a 466-residue protein sequence, read N- to C-terminus: MDIKGGRRGNVEDSLNKLSLSPPDNNSSFLSNHFQVRKSYSQAPARTLKPFASEDIKILLLENVNQSALSNLKDEGYQVEFLKTSMSEDDLVEKIKGVHAIGIRSKTRLTRRVLEAADSLIVIGCFCIGTNQVDLDFAAERGIAVFNSPYANSRSVAELVIGYIISLARQVGDRSLELHRGEWNKVSSGCWEIRGKTLGIIGYGHIGSQLSVLAEAMGLHVVYYDILPIMPLGSAKQLSSLPELLHRADFVSLHVPASPETKNMISSKEFAAMKEGSYLINASRGTVVDIPALVDASKSGKIAGAAIDVYPSEPAGNGKDKFVDSLNSWTSELTHCKNIILTPHIGGSTEEAQYNIGIEVSEALTRYINEGNSIGAVNFPEVSLRSLTEADRNAARVLFVHRNVPGVLRQVNELFIDHNIKSQFSDSRGDIAYLVADISDCTPGSLEALHQKLESLPCKINTRLLY.

The span at 1–15 (MDIKGGRRGNVEDSL) shows a compositional bias: basic and acidic residues. Positions 1–26 (MDIKGGRRGNVEDSLNKLSLSPPDNN) are disordered. Polar residues predominate over residues 16–26 (NKLSLSPPDNN). Ser87 bears the Phosphoserine mark. NAD(+) contacts are provided by residues 205 to 206 (HI) and Asp225. Ser258 bears the Phosphoserine mark. NAD(+) is bound by residues 282–284 (ASR) and Asp308. Arg284 is a catalytic residue. Residue Glu313 is part of the active site. The active-site Proton donor is His344. 344-347 (HIGG) lines the NAD(+) pocket. Residues 396 to 466 (RVLFVHRNVP…PCKINTRLLY (71 aa)) form the ACT domain.

This sequence belongs to the D-isomer specific 2-hydroxyacid dehydrogenase family.

The enzyme catalyses (2R)-3-phosphoglycerate + NAD(+) = 3-phosphooxypyruvate + NADH + H(+). It carries out the reaction (R)-2-hydroxyglutarate + NAD(+) = 2-oxoglutarate + NADH + H(+). The protein operates within amino-acid biosynthesis; L-serine biosynthesis; L-serine from 3-phospho-D-glycerate: step 1/3. In terms of biological role, catalyzes the reversible oxidation of 3-phospho-D-glycerate to 3-phosphonooxypyruvate, the first step of the phosphorylated L-serine biosynthesis pathway. Also catalyzes the reversible oxidation of 2-hydroxyglutarate to 2-oxoglutarate. The polypeptide is Putative D-3-phosphoglycerate dehydrogenase (Schizosaccharomyces pombe (strain 972 / ATCC 24843) (Fission yeast)).